Consider the following 660-residue polypeptide: ATPase WRNIP1 (660 aa).

A UBZ4-type zinc finger spans residues 17-44 (QVQCPVCQQMMPAAHINSHLDRCLLLHP). C20, C23, H31, H35, and C39 together coordinate Zn(2+). Positions 50–191 (PAAGPHRAGE…DDPGHWDADA (142 aa)) are disordered. 2 positions are modified to phosphoserine: S65 and S75. Residues 76 to 89 (ESSALKQPATPTAA) are compositionally biased toward polar residues. K81 is covalently cross-linked (Glycyl lysine isopeptide (Lys-Gly) (interchain with G-Cter in ubiquitin)). Position 85 is a phosphothreonine (T85). Phosphoserine is present on residues S91 and S92. The span at 92 to 104 (SEGEGEEGDDGGE) shows a compositional bias: acidic residues. T116 carries the post-translational modification Phosphothreonine. Residues 135–155 (ARKGLGKRPAAAAAAGSASPR) show a composition bias toward low complexity. A Glycyl lysine isopeptide (Lys-Gly) (interchain with G-Cter in ubiquitin) cross-link involves residue K141. Phosphoserine is present on S153. Residues 159-182 (ETEAQEEEEAGVDGDGDADVDGED) are compositionally biased toward acidic residues. A Glycyl lysine isopeptide (Lys-Gly) (interchain with G-Cter in ubiquitin) cross-link involves residue K220. 265 to 271 (PGCGKTT) lines the ATP pocket. Glycyl lysine isopeptide (Lys-Gly) (interchain with G-Cter in ubiquitin) cross-links involve residues K296, K305, K311, K317, and K330. K477 is covalently cross-linked (Glycyl lysine isopeptide (Lys-Gly) (interchain with G-Cter in SUMO2); alternate). Residue K477 forms a Glycyl lysine isopeptide (Lys-Gly) (interchain with G-Cter in ubiquitin); alternate linkage. Phosphotyrosine is present on residues Y529 and Y557. K622 is covalently cross-linked (Glycyl lysine isopeptide (Lys-Gly) (interchain with G-Cter in ubiquitin)). Residue K628 forms a Glycyl lysine isopeptide (Lys-Gly) (interchain with G-Cter in ubiquitin); alternate linkage. K628 carries the N6-acetyllysine; alternate modification. A Glycyl lysine isopeptide (Lys-Gly) (interchain with G-Cter in ubiquitin) cross-link involves residue K631.

The protein belongs to the AAA ATPase family. RarA/MGS1/WRNIP1 subfamily. Forms homooligomers, possibly octamers. Directly interacts with POLD1, POLD2 and POLD4. Interacts with the N-terminal domain of WRN. Interacts (via UBZ4-type zinc finger) with monoubiquitin and polyubiquitin. Interacts with TRIM14 and PPP6C; these interactions positively regulate the RIGI signaling pathway. Sumoylated with SUMO1 and SUMO2/3. Ubiquitously expressed.

It localises to the nucleus. The protein resides in the cytoplasm. The enzyme catalyses ATP + H2O = ADP + phosphate + H(+). Functionally, functions as a modulator of initiation or reinitiation events during DNA polymerase delta-mediated DNA synthesis. In the presence of ATP, stimulation of DNA polymerase delta-mediated DNA synthesis is decreased. Also plays a role in the innate immune defense against viruses. Stabilizes the RIGI dsRNA interaction and promotes RIGI 'Lys-63'-linked polyubiquitination. In turn, RIGI transmits the signal through mitochondrial MAVS. In Rattus norvegicus (Rat), this protein is ATPase WRNIP1.